The chain runs to 387 residues: Deoxyguanosinetriphosphate triphosphohydrolase-like protein (387 aa).

An HD domain is found at 78-209 (RLTHSLEVAQ…ANLADEVAYN (132 aa)).

This sequence belongs to the dGTPase family. Type 2 subfamily.

The polypeptide is Deoxyguanosinetriphosphate triphosphohydrolase-like protein (Ralstonia nicotianae (strain ATCC BAA-1114 / GMI1000) (Ralstonia solanacearum)).